The chain runs to 511 residues: Maturase K (511 aa).

Belongs to the intron maturase 2 family. MatK subfamily.

It is found in the plastid. Its subcellular location is the chloroplast. Usually encoded in the trnK tRNA gene intron. Probably assists in splicing its own and other chloroplast group II introns. In Maihuenia poeppigii (Hardy cactus), this protein is Maturase K.